A 292-amino-acid polypeptide reads, in one-letter code: Complex I assembly factor TIMMDC1, mitochondrial (292 aa).

2 helical membrane passes run 146 to 168 (WSWR…TVYR) and 195 to 215 (GLLS…VLIL).

The protein belongs to the Tim17/Tim22/Tim23 family. Associates with the intermediate 315 kDa subcomplex of incompletely assembled complex I.

The protein localises to the mitochondrion membrane. In terms of biological role, chaperone protein involved in the assembly of the mitochondrial NADH:ubiquinone oxidoreductase complex (complex I). Participates in constructing the membrane arm of complex I. This is Complex I assembly factor TIMMDC1, mitochondrial (timmdc1) from Danio rerio (Zebrafish).